The following is a 424-amino-acid chain: Ancylostoma secreted protein (424 aa).

Positions 1–18 (MFSPVIVSVIFTIAFCDA) are cleaved as a signal peptide. SCP domains lie at 41 to 177 (LDFH…SCIY) and 242 to 387 (LSVH…VCQY).

This sequence belongs to the CRISP family.

Its subcellular location is the secreted. Functionally, associated with the transition to parasitism by infective hookworm larvae. The chain is Ancylostoma secreted protein (ASP) from Ancylostoma caninum (Dog hookworm).